The sequence spans 359 residues: Serine/threonine-protein kinase SAPK7 (359 aa).

Positions 4 to 260 (YELLKDIGAG…IREIRNHPWF (257 aa)) constitute a Protein kinase domain. ATP is bound by residues 10-18 (IGAGNFGVA) and Lys33. The active-site Proton acceptor is the Asp123. A disordered region spans residues 299–359 (EEARTPPRSS…VHASGEFQLS (61 aa)). Residues 331–343 (EEQEEEEDAEDEY) are compositionally biased toward acidic residues.

The protein belongs to the protein kinase superfamily. Ser/Thr protein kinase family. In terms of processing, may be phosphorylated. In terms of tissue distribution, weakly expressed in roots. Expressed in roots of young seedlings.

It localises to the cytoplasm. The protein localises to the nucleus. It carries out the reaction L-seryl-[protein] + ATP = O-phospho-L-seryl-[protein] + ADP + H(+). It catalyses the reaction L-threonyl-[protein] + ATP = O-phospho-L-threonyl-[protein] + ADP + H(+). Activated by hyperosmotic stress. In terms of biological role, may play a role in signal transduction of hyperosmotic response. This is Serine/threonine-protein kinase SAPK7 (SAPK7) from Oryza sativa subsp. japonica (Rice).